Reading from the N-terminus, the 209-residue chain is Uracil phosphoribosyltransferase (209 aa).

5-phospho-alpha-D-ribose 1-diphosphate-binding positions include R79, R104, and 131–139; that span reads DPMLATGGS. Residues I194 and 199–201 each bind uracil; that span reads GDA. Position 200 (D200) interacts with 5-phospho-alpha-D-ribose 1-diphosphate.

The protein belongs to the UPRTase family. The cofactor is Mg(2+).

It carries out the reaction UMP + diphosphate = 5-phospho-alpha-D-ribose 1-diphosphate + uracil. It functions in the pathway pyrimidine metabolism; UMP biosynthesis via salvage pathway; UMP from uracil: step 1/1. Its activity is regulated as follows. Allosterically activated by GTP. Catalyzes the conversion of uracil and 5-phospho-alpha-D-ribose 1-diphosphate (PRPP) to UMP and diphosphate. The protein is Uracil phosphoribosyltransferase of Enterococcus faecalis (strain ATCC 700802 / V583).